Reading from the N-terminus, the 1329-residue chain is Synergin gamma (1329 aa).

A coiled-coil region spans residues 112–152 (MQKQFAEEQQKRFEQQQKLLEEERKRRQFEEQKQKLRLLSS). The disordered stretch occupies residues 175–211 (GFSRDAKMHPTPASHPKKPDCPTSSHSTKTVSPSSAF). Over residues 197 to 209 (TSSHSTKTVSPSS) the composition is skewed to low complexity. An EH domain is found at 393–504 (NESLVPDAYK…TPVSQPTAMT (112 aa)). Residues 555 to 559 (DFQDF) carry the DFXDF motif 1 motif. S571 carries the post-translational modification Phosphoserine. Residues 578–594 (VPASSKTSNSQHGNSAP) are compositionally biased toward polar residues. Positions 578–600 (VPASSKTSNSQHGNSAPSLLIPL) are disordered. K609 carries the post-translational modification N6-acetyllysine. Positions 614 to 878 (KGISAEKPSE…ADFHSSKFSS (265 aa)) are interaction with AP1G1. Disordered regions lie at residues 661–701 (GTDD…TQTQ) and 730–753 (AFST…PASL). The residue at position 676 (S676) is a Phosphoserine. Residues 761–773 (LADDFGEFNLFGE) are interaction with AP1G1, AP1G2 and GGA1. The short motif at 785–789 (DFADF) is the DFXDF motif 2 element. Residues 797–835 (IPSEPKADDKYEALREEGSPGALSTSTVEGAHNPPVSSS) are disordered. Positions 801–814 (PKADDKYEALREEG) are enriched in basic and acidic residues. S815 carries the phosphoserine modification. K836 bears the N6-acetyllysine mark. Phosphoserine occurs at positions 844 and 864. 3 disordered regions span residues 856–922 (KENT…DSED), 941–1042 (HVMS…FGEF), and 1088–1113 (SLSL…RDRS). Over residues 864–873 (SDGDFADFHS) the composition is skewed to basic and acidic residues. The DFXDF motif 3 motif lies at 867–871 (DFADF). Low complexity predominate over residues 874 to 883 (SKFSSTSSDK). S904, S944, S947, S997, S1021, S1088, S1090, S1102, and S1113 each carry phosphoserine. Positions 944–955 (SDSSLDLPTVSG) are enriched in polar residues. The span at 1016–1028 (ENTCPSPASSVAS) shows a compositional bias: polar residues. At T1115 the chain carries Phosphothreonine.

As to quaternary structure, self-associates. Interacts with GGA1 (via GAE domain). Interacts with GGA2 and GGA3. Interacts with AP1G1 (via GAE domain), a subunit of adapter protein complex AP-1. Interacts with AP1G2 (via GAE domain) a subunit of adapter protein complex AP-1. Component of the aftiphilin/p200/gamma-synergin complex, at least composed of AFTPH/aftiphilin, HEATR5B/p200a and SYNRG/gamma-synergin, which plays a role in the AP1G1/AP-1-mediated trafficking of transferrin from early to recycling endosomes. Within the complex interacts with AFTPH/aftiphilin and HEATR5B/p200a; the interactions are direct. Interacts (via EH domain) with SCAMP1. As to expression, detected in brain and liver (at protein level). Ubiquitously expressed.

It localises to the cytoplasm. It is found in the golgi apparatus. Its subcellular location is the trans-Golgi network membrane. The protein resides in the perinuclear region. The protein localises to the cytoplasmic vesicle. It localises to the clathrin-coated vesicle. Plays a role in endocytosis and/or membrane trafficking at the trans-Golgi network (TGN). May act by linking the adapter protein complex AP-1 to other proteins. Component of clathrin-coated vesicles. Component of the aftiphilin/p200/gamma-synergin complex, which plays roles in AP1G1/AP-1-mediated protein trafficking including the trafficking of transferrin from early to recycling endosomes, and the membrane trafficking of furin and the lysosomal enzyme cathepsin D between the trans-Golgi network (TGN) and endosomes. This chain is Synergin gamma (Synrg), found in Rattus norvegicus (Rat).